The sequence spans 138 residues: Large ribosomal subunit protein eL27 (138 aa).

The protein belongs to the eukaryotic ribosomal protein eL27 family.

This Solanum tuberosum (Potato) protein is Large ribosomal subunit protein eL27 (RPL27).